The sequence spans 414 residues: S-adenosylmethionine synthase (414 aa).

Histidine 11 lines the ATP pocket. Aspartate 13 is a binding site for Mg(2+). Residue glutamate 39 participates in K(+) binding. Residues glutamate 52 and glutamine 95 each coordinate L-methionine. A flexible loop region spans residues 95–105 (QSPDIAQGVNM). ATP contacts are provided by residues 169-171 (DGK), 245-246 (KF), aspartate 254, 260-261 (RK), alanine 277, and lysine 281. Aspartate 254 is an L-methionine binding site. Lysine 285 serves as a coordination point for L-methionine.

Belongs to the AdoMet synthase family. As to quaternary structure, homotetramer; dimer of dimers. It depends on Mg(2+) as a cofactor. K(+) is required as a cofactor.

Its subcellular location is the cytoplasm. The enzyme catalyses L-methionine + ATP + H2O = S-adenosyl-L-methionine + phosphate + diphosphate. The protein operates within amino-acid biosynthesis; S-adenosyl-L-methionine biosynthesis; S-adenosyl-L-methionine from L-methionine: step 1/1. In terms of biological role, catalyzes the formation of S-adenosylmethionine (AdoMet) from methionine and ATP. The overall synthetic reaction is composed of two sequential steps, AdoMet formation and the subsequent tripolyphosphate hydrolysis which occurs prior to release of AdoMet from the enzyme. The polypeptide is S-adenosylmethionine synthase (Synechococcus sp. (strain JA-2-3B'a(2-13)) (Cyanobacteria bacterium Yellowstone B-Prime)).